The sequence spans 285 residues: MLSVVAIPKICVTGPARRCFFHTAKKLYADDYKPAAMSSNAPSLTKDQAKKRELKRLVQRKAEAKRPATASPLYMPVTKALRYLRAAEVGRPQSQQTINLTTLVVGERGTAPLSGSVTFPKPLRYIKIAAFTNDESKLEELREKYPNHLIGGADLVAKIKSGEISVDFDKAFATPDIVPALQSQVARILGPRGVLPSVKKGTVSDDISSLLQESLGSMPFRQRGNSISIGVGKCYFTDREILQNIISARAAFKTAVDNQKSKKPNILSKTTLSSTHGPGIVIDFA.

The N-terminal 19 residues, 1-19, are a transit peptide targeting the mitochondrion; sequence MLSVVAIPKICVTGPARRC.

It belongs to the universal ribosomal protein uL1 family. Component of the mitochondrial large ribosomal subunit (mt-LSU). Mature yeast 74S mitochondrial ribosomes consist of a small (37S) and a large (54S) subunit. The 37S small subunit contains a 15S ribosomal RNA (15S mt-rRNA) and 34 different proteins. The 54S large subunit contains a 21S rRNA (21S mt-rRNA) and 46 different proteins.

It is found in the mitochondrion. In terms of biological role, component of the mitochondrial ribosome (mitoribosome), a dedicated translation machinery responsible for the synthesis of mitochondrial genome-encoded proteins, including at least some of the essential transmembrane subunits of the mitochondrial respiratory chain. The mitoribosomes are attached to the mitochondrial inner membrane and translation products are cotranslationally integrated into the membrane. The protein is Large ribosomal subunit protein uL1m (MRPL1) of Saccharomyces cerevisiae (strain ATCC 204508 / S288c) (Baker's yeast).